The chain runs to 227 residues: Phosphatidylserine decarboxylase proenzyme (227 aa).

Residue serine 169 is the Schiff-base intermediate with substrate; via pyruvic acid of the active site. Pyruvic acid (Ser); by autocatalysis is present on serine 169. The tract at residues 197 to 227 (GRIPTPESGRSSSAEATAAPSASSARRSSAS) is disordered. A compositionally biased stretch (low complexity) spans 206 to 227 (RSSSAEATAAPSASSARRSSAS).

It belongs to the phosphatidylserine decarboxylase family. PSD-A subfamily. As to quaternary structure, heterodimer of a large membrane-associated beta subunit and a small pyruvoyl-containing alpha subunit. Requires pyruvate as cofactor. In terms of processing, is synthesized initially as an inactive proenzyme. Formation of the active enzyme involves a self-maturation process in which the active site pyruvoyl group is generated from an internal serine residue via an autocatalytic post-translational modification. Two non-identical subunits are generated from the proenzyme in this reaction, and the pyruvate is formed at the N-terminus of the alpha chain, which is derived from the carboxyl end of the proenzyme. The post-translation cleavage follows an unusual pathway, termed non-hydrolytic serinolysis, in which the side chain hydroxyl group of the serine supplies its oxygen atom to form the C-terminus of the beta chain, while the remainder of the serine residue undergoes an oxidative deamination to produce ammonia and the pyruvoyl prosthetic group on the alpha chain.

The protein resides in the cell membrane. The catalysed reaction is a 1,2-diacyl-sn-glycero-3-phospho-L-serine + H(+) = a 1,2-diacyl-sn-glycero-3-phosphoethanolamine + CO2. It participates in phospholipid metabolism; phosphatidylethanolamine biosynthesis; phosphatidylethanolamine from CDP-diacylglycerol: step 2/2. Its function is as follows. Catalyzes the formation of phosphatidylethanolamine (PtdEtn) from phosphatidylserine (PtdSer). The sequence is that of Phosphatidylserine decarboxylase proenzyme from Salinibacter ruber (strain DSM 13855 / M31).